A 386-amino-acid chain; its full sequence is Succinate--CoA ligase [ADP-forming] subunit beta (386 aa).

ATP is bound by residues Lys-46, 53 to 55 (GRG), Glu-99, Gln-102, and Glu-107. Mg(2+)-binding residues include Asn-199 and Asp-213. Residues Asn-264 and 321 to 323 (GIV) contribute to the substrate site.

This sequence belongs to the succinate/malate CoA ligase beta subunit family. In terms of assembly, heterotetramer of two alpha and two beta subunits. It depends on Mg(2+) as a cofactor.

The enzyme catalyses succinate + ATP + CoA = succinyl-CoA + ADP + phosphate. It carries out the reaction GTP + succinate + CoA = succinyl-CoA + GDP + phosphate. It participates in carbohydrate metabolism; tricarboxylic acid cycle; succinate from succinyl-CoA (ligase route): step 1/1. Functionally, succinyl-CoA synthetase functions in the citric acid cycle (TCA), coupling the hydrolysis of succinyl-CoA to the synthesis of either ATP or GTP and thus represents the only step of substrate-level phosphorylation in the TCA. The beta subunit provides nucleotide specificity of the enzyme and binds the substrate succinate, while the binding sites for coenzyme A and phosphate are found in the alpha subunit. This Ruthia magnifica subsp. Calyptogena magnifica protein is Succinate--CoA ligase [ADP-forming] subunit beta.